We begin with the raw amino-acid sequence, 216 residues long: Octanoyltransferase (216 aa).

The BPL/LPL catalytic domain maps to Asn35–Phe213. Residues Arg77–His84, Ser144–Gly146, and Gly157–Ser159 each bind substrate. The active-site Acyl-thioester intermediate is Cys175.

It belongs to the LipB family.

The protein localises to the cytoplasm. The enzyme catalyses octanoyl-[ACP] + L-lysyl-[protein] = N(6)-octanoyl-L-lysyl-[protein] + holo-[ACP] + H(+). The protein operates within protein modification; protein lipoylation via endogenous pathway; protein N(6)-(lipoyl)lysine from octanoyl-[acyl-carrier-protein]: step 1/2. Its function is as follows. Catalyzes the transfer of endogenously produced octanoic acid from octanoyl-acyl-carrier-protein onto the lipoyl domains of lipoate-dependent enzymes. Lipoyl-ACP can also act as a substrate although octanoyl-ACP is likely to be the physiological substrate. In Prochlorococcus marinus (strain MIT 9312), this protein is Octanoyltransferase.